The following is a 302-amino-acid chain: L-threonate dehydrogenase (302 aa).

Residues Phe7–Ala35 and Thr102 each bind NAD(+). The active site involves Lys178. Residue Lys246 coordinates NAD(+).

It belongs to the HIBADH-related family. L-threonate dehydrogenase subfamily.

It catalyses the reaction L-threonate + NAD(+) = 2-dehydro-L-erythronate + NADH + H(+). Functionally, catalyzes oxidation of L-threonate to 2-oxo-tetronate. Can use either NAD(+) or NADP(+) as cosubstrate, with a preference for NAD(+). This Escherichia coli (strain K12) protein is L-threonate dehydrogenase.